The sequence spans 1067 residues: Protein CLEC16A homolog (1067 aa).

Residues 50-199 (LRCIAEILIW…AVRTISLNVY (150 aa)) form the FPL domain. A helical transmembrane segment spans residues 333–353 (SIVALFLLSLVFLVVSHAPLV). Residues 409 to 418 (SSSSYALSED) are compositionally biased toward low complexity. Disordered stretches follow at residues 409–434 (SSSS…LDSQ), 837–861 (ASSS…PMFS), 876–993 (SNSA…SRSH), and 1037–1067 (QSSE…IETV). Polar residues predominate over residues 421 to 432 (VESSSPATTELD). The segment covering 876-888 (SNSAGVSRTQMAP) has biased composition (polar residues). Basic and acidic residues predominate over residues 917-926 (RADHSDRERS). Over residues 927–947 (PSVSMGSHSSSQSRENSQPRS) the composition is skewed to low complexity. Residues 951–974 (RSRESSPRMPRPRSEEIPLEDFQH) are compositionally biased toward basic and acidic residues. Positions 975-993 (SRNNSPHSRGNPSPASRSH) are enriched in polar residues. Residues 1057–1067 (EGRRRGAIETV) are compositionally biased toward basic and acidic residues.

This sequence belongs to the CLEC16A/gop-1 family. In terms of assembly, interacts with the class C Vps-HOPS complex components; Car, Dor and Vps16a.

Its subcellular location is the cytoplasmic vesicle. The protein localises to the autophagosome membrane. It localises to the late endosome membrane. The protein resides in the golgi apparatus membrane. In terms of biological role, required for mitophagy, autophagy and endosome maturation, possibly by acting in multiple membrane trafficking pathways. Required for endosome trafficking and maturation. Functions with the class C Vps-HOPS complex member Vps16a to promote endosomal maturation into degradative late endosomes and lysosomes. In response to starvation, functions at an early stage of autophagy to promote autophagosome growth and efficient autophagy. Essential for the recruitment of lva-positive Golgi elements to autophagosomes. Likely to function by promoting membrane traffic from the Golgi complex to the developing autophagosomes. Also regulates synaptic growth at the neuromuscular junctions (NMJ) by down-regulating BMP signaling. The protein is Protein CLEC16A homolog of Drosophila melanogaster (Fruit fly).